The primary structure comprises 295 residues: Nucleotide-binding protein BLi03725/BL03417 (295 aa).

16–23 (GMSGAGKT) is a binding site for ATP. 67–70 (DLRG) lines the GTP pocket.

The protein belongs to the RapZ-like family.

In terms of biological role, displays ATPase and GTPase activities. The sequence is that of Nucleotide-binding protein BLi03725/BL03417 from Bacillus licheniformis (strain ATCC 14580 / DSM 13 / JCM 2505 / CCUG 7422 / NBRC 12200 / NCIMB 9375 / NCTC 10341 / NRRL NRS-1264 / Gibson 46).